The primary structure comprises 438 residues: Anthranilate synthase component 1 (438 aa).

L-tryptophan is bound by residues Ser45 and 220–222 (PYL). 255 to 256 (GT) serves as a coordination point for chorismate. Glu282 serves as a coordination point for Mg(2+). Residues Tyr370, Arg389, 405–407 (GAG), and Gly407 contribute to the chorismate site. Glu420 contacts Mg(2+).

The protein belongs to the anthranilate synthase component I family. As to quaternary structure, heterotetramer consisting of two non-identical subunits: a beta subunit (TrpG) and a large alpha subunit (TrpE). Requires Mg(2+) as cofactor.

The catalysed reaction is chorismate + L-glutamine = anthranilate + pyruvate + L-glutamate + H(+). The protein operates within amino-acid biosynthesis; L-tryptophan biosynthesis; L-tryptophan from chorismate: step 1/5. Its activity is regulated as follows. Feedback inhibited by tryptophan. In terms of biological role, part of a heterotetrameric complex that catalyzes the two-step biosynthesis of anthranilate, an intermediate in the biosynthesis of L-tryptophan. In the first step, the glutamine-binding beta subunit (TrpG) of anthranilate synthase (AS) provides the glutamine amidotransferase activity which generates ammonia as a substrate that, along with chorismate, is used in the second step, catalyzed by the large alpha subunit of AS (TrpE) to produce anthranilate. In the absence of TrpG, TrpE can synthesize anthranilate directly from chorismate and high concentrations of ammonia. The sequence is that of Anthranilate synthase component 1 (trpE) from Aeropyrum pernix (strain ATCC 700893 / DSM 11879 / JCM 9820 / NBRC 100138 / K1).